Reading from the N-terminus, the 343-residue chain is Ornithine carbamoyltransferase, catabolic (343 aa).

A carbamoyl phosphate-binding site is contributed by Ser62–Thr65. Position 79 (His79) interacts with Ni(2+). Carbamoyl phosphate contacts are provided by residues Gln89, Arg113, and His140–Gln143. Residues Asn172, Asp236, and Ser240 to Met241 each bind L-ornithine. Residues Cys278–Leu279 and Arg323 each bind carbamoyl phosphate.

This sequence belongs to the aspartate/ornithine carbamoyltransferase superfamily. OTCase family. As to quaternary structure, homohexamer; dimer of trimers. Requires Ni(2+) as cofactor.

It is found in the cytoplasm. It catalyses the reaction carbamoyl phosphate + L-ornithine = L-citrulline + phosphate + H(+). Its pathway is amino-acid degradation; L-arginine degradation via ADI pathway; carbamoyl phosphate from L-arginine: step 2/2. Functionally, involved in the catabolism of arginine. Catalyzes the phosphorolysis of citrulline, the reverse reaction of the biosynthetic one, yielding ornithine and carbamoyl phosphate which serve to generate ATP from ADP. This Lentilactobacillus hilgardii (Lactobacillus hilgardii) protein is Ornithine carbamoyltransferase, catabolic.